A 220-amino-acid polypeptide reads, in one-letter code: ATP-dependent dethiobiotin synthetase BioD (220 aa).

An ATP-binding site is contributed by 13-18 (EVGKTV). Mg(2+) is bound at residue Thr-17. Lys-38 is a catalytic residue. Position 42 (Ser-42) interacts with substrate. ATP contacts are provided by residues Asp-55, 116 to 119 (EGAG), 176 to 177 (NR), and Asn-212. Mg(2+) is bound by residues Asp-55 and Glu-116.

Belongs to the dethiobiotin synthetase family. In terms of assembly, homodimer. It depends on Mg(2+) as a cofactor.

Its subcellular location is the cytoplasm. It carries out the reaction (7R,8S)-7,8-diammoniononanoate + CO2 + ATP = (4R,5S)-dethiobiotin + ADP + phosphate + 3 H(+). It participates in cofactor biosynthesis; biotin biosynthesis; biotin from 7,8-diaminononanoate: step 1/2. Its function is as follows. Catalyzes a mechanistically unusual reaction, the ATP-dependent insertion of CO2 between the N7 and N8 nitrogen atoms of 7,8-diaminopelargonic acid (DAPA, also called 7,8-diammoniononanoate) to form a ureido ring. The chain is ATP-dependent dethiobiotin synthetase BioD from Photobacterium profundum (strain SS9).